The chain runs to 117 residues: Immunoglobulin heavy variable 1-69 (117 aa).

An N-terminal signal peptide occupies residues 1–19; the sequence is MDWTWRFLFVVAAATGVQS. Position 20 is a pyrrolidone carboxylic acid (glutamine 20). Positions 20-44 are framework-1; sequence QVQLVQSGAEVKKPGSSVKVSCKAS. One can recognise an Ig-like domain in the interval 20–117; that stretch reads QVQLVQSGAE…EDTAVYYCAR (98 aa). Cysteine 41 and cysteine 115 are disulfide-bonded. Residues 45–52 are complementarity-determining-1; sequence GGTFSSYA. Positions 53–69 are framework-2; that stretch reads ISWVRQAPGQGLEWMGG. The tract at residues 70-77 is complementarity-determining-2; that stretch reads IIPIFGTA. The framework-3 stretch occupies residues 78-115; it reads NYAQKFQGRVTITADKSTSTAYMELSSLRSEDTAVYYC. The segment at 116-117 is complementarity-determining-3; it reads AR.

As to quaternary structure, immunoglobulins are composed of two identical heavy chains and two identical light chains; disulfide-linked.

The protein resides in the secreted. The protein localises to the cell membrane. In terms of biological role, v region of the variable domain of immunoglobulin heavy chains that participates in the antigen recognition. Immunoglobulins, also known as antibodies, are membrane-bound or secreted glycoproteins produced by B lymphocytes. In the recognition phase of humoral immunity, the membrane-bound immunoglobulins serve as receptors which, upon binding of a specific antigen, trigger the clonal expansion and differentiation of B lymphocytes into immunoglobulins-secreting plasma cells. Secreted immunoglobulins mediate the effector phase of humoral immunity, which results in the elimination of bound antigens. The antigen binding site is formed by the variable domain of one heavy chain, together with that of its associated light chain. Thus, each immunoglobulin has two antigen binding sites with remarkable affinity for a particular antigen. The variable domains are assembled by a process called V-(D)-J rearrangement and can then be subjected to somatic hypermutations which, after exposure to antigen and selection, allow affinity maturation for a particular antigen. The polypeptide is Immunoglobulin heavy variable 1-69 (Homo sapiens (Human)).